The primary structure comprises 436 residues: MSVTVETLENLERKVVLSLPWSEINAETDKKLKQTQRRAKIDGFRPGKAPLKMIAQMYGASAQNDVINELVQRRFHDVAVAQELKVAGFPRFEGVEEQDDKESFKVAAIFEVFPEVVIGDLSAQEVEKVTASVGDAEVDQTVEILRKQRTRFNHVEREARNGDRVIIDFEGKIDGEPFAGGASKNYAFVLGASQMLPEFEAGVVGMKAGESKDVTVNFPEDYHGKDVAGKTAVFTITLNNVSEATLPEVDADFAKALGIADGDVAKMREEVQKNVSREVERRVNEQTKESVMNALLKAVELKAPVALVNEEAARLANEMKQNFVNQGMADAANLDLPLDMFKEQAERRVSLGLILAKLVDENKLEPTEEQIKAVVANFAESYEDPQEVIDWYYADPSRLQAPTSLAVESNVVDFVLGKAKVNEKALSFDEVMGAQA.

Residues 162–247 (GDRVIIDFEG…LNNVSEATLP (86 aa)) enclose the PPIase FKBP-type domain.

It belongs to the FKBP-type PPIase family. Tig subfamily.

Its subcellular location is the cytoplasm. It catalyses the reaction [protein]-peptidylproline (omega=180) = [protein]-peptidylproline (omega=0). In terms of biological role, involved in protein export. Acts as a chaperone by maintaining the newly synthesized protein in an open conformation. Functions as a peptidyl-prolyl cis-trans isomerase. The sequence is that of Trigger factor from Neisseria meningitidis serogroup C (strain 053442).